The following is a 1146-amino-acid chain: Lysine-specific demethylase 2A (1146 aa).

Residues 146–314 form the JmjC domain; sequence FSHTKLENLV…MQLRIYSIED (169 aa). A substrate-binding site is contributed by Thr207. Fe cation contacts are provided by His210 and Asp212. A substrate-binding site is contributed by Lys227. His282 lines the Fe cation pocket. 2 disordered regions span residues 363-467 and 554-585; these read LNGR…PDSP and TKPHTMRPASRHSTAPPRTSGTPSGTTASSGA. Residues 373–387 are compositionally biased toward low complexity; it reads SSSSSSSSSGLSSSS. Acidic residues predominate over residues 388–401; that stretch reads DNDDSSDQDWEEEE. Positions 402–442 are enriched in basic and acidic residues; it reads GLRKRERDRCRVERELQRKRNRDRQQRDQERDRHGRTERII. Residues 453 to 467 are compositionally biased toward pro residues; that stretch reads LTPPPSLPLPTPDSP. Over residues 566-584 the composition is skewed to low complexity; that stretch reads STAPPRTSGTPSGTTASSG. The segment at 585-631 adopts a CXXC-type zinc-finger fold; sequence ARRRRVRCRKCQACVQRECGTCHYCKDMKKFGGPGRMKQSCVLRQCL. Positions 592, 595, 598, 603, 606, 609, 625, and 630 each coordinate Zn(2+). Residues 638 to 699 form a PHD-type zinc finger; that stretch reads SVTCALCGEV…YWECPKCYEG (62 aa). Disordered regions lie at residues 733 to 800 and 832 to 867; these read VLRP…EGDR and TPNPRQPIRAAPLHQDEEREEEEEEEEEEEETENVM. Pro residues predominate over residues 739-762; sequence GQSPPSPPLLLLPPSPSSAPPTPP. Residues 772 to 789 show a composition bias toward basic and acidic residues; sequence SREERAKRRQLAREKENH. Residues 849–864 show a composition bias toward acidic residues; sequence EREEEEEEEEEEEETE. Residues 874-919 form the F-box domain; sequence STSMQKDVWLSVFHYLTHEELCICMRVCKAWYKWGCDKRLWSRIDV. LRR repeat units lie at residues 945–966, 968–994, 1032–1057, 1058–1087, 1088–1112, and 1113–1138; these read WTNVSKKQLIWLINRLPGLKDL, LAGCTWSAVSALASCSCPLLRTLDLRW, GLDISDVTLRLIIRHCPLLSKLDLSH, CPLLSDQSVNLLTAVGSSTRGTLTHIHLAG, CKGVTDESLLYLRRATNLSLIDLHG, and CKQVTRGACEEFISDLSVSTLYCLSD.

It belongs to the JHDM1 histone demethylase family. Requires Fe(2+) as cofactor.

It localises to the nucleus. The protein resides in the nucleoplasm. The enzyme catalyses N(6),N(6)-dimethyl-L-lysyl(36)-[histone H3] + 2 2-oxoglutarate + 2 O2 = L-lysyl(36)-[histone H3] + 2 formaldehyde + 2 succinate + 2 CO2. Its function is as follows. Histone demethylase that specifically demethylates 'Lys-36' of histone H3, thereby playing a central role in histone code. Preferentially demethylates dimethylated H3 'Lys-36' residue while it has weak or no activity for mono- and tri-methylated H3 'Lys-36'. May also recognize and bind to some phosphorylated proteins and promote their ubiquitination and degradation. Required to maintain the heterochromatic state. Associates with centromeres and represses transcription of small non-coding RNAs that are encoded by the clusters of satellite repeats at the centromere. Required to sustain centromeric integrity and genomic stability, particularly during mitosis. May play a role in the regulation of circadian gene expression. The sequence is that of Lysine-specific demethylase 2A (kdm2a) from Xenopus tropicalis (Western clawed frog).